The sequence spans 375 residues: 4-hydroxy-3-methylbut-2-en-1-yl diphosphate synthase (flavodoxin) (375 aa).

Positions 270, 273, 305, and 312 each coordinate [4Fe-4S] cluster.

This sequence belongs to the IspG family. [4Fe-4S] cluster is required as a cofactor.

It carries out the reaction (2E)-4-hydroxy-3-methylbut-2-enyl diphosphate + oxidized [flavodoxin] + H2O + 2 H(+) = 2-C-methyl-D-erythritol 2,4-cyclic diphosphate + reduced [flavodoxin]. Its pathway is isoprenoid biosynthesis; isopentenyl diphosphate biosynthesis via DXP pathway; isopentenyl diphosphate from 1-deoxy-D-xylulose 5-phosphate: step 5/6. In terms of biological role, converts 2C-methyl-D-erythritol 2,4-cyclodiphosphate (ME-2,4cPP) into 1-hydroxy-2-methyl-2-(E)-butenyl 4-diphosphate. The sequence is that of 4-hydroxy-3-methylbut-2-en-1-yl diphosphate synthase (flavodoxin) from Yersinia pseudotuberculosis serotype IB (strain PB1/+).